The chain runs to 437 residues: Chromosomal replication initiator protein DnaA (437 aa).

Residues 1–67 (MKNKIIASLK…KVVKDILGKD (67 aa)) are domain I, interacts with DnaA modulators. The domain II stretch occupies residues 67–97 (DATYEITFKEIPYETKVESGPLIKKRPLLIT). Residues 98–313 (PLNPKYTFEN…GAILRLIAYR (216 aa)) form a domain III, AAA+ region region. Residues glycine 141, glycine 143, lysine 144, and threonine 145 each coordinate ATP. The tract at residues 314-437 (NLYGTLNLSI…SKGFAQGESM (124 aa)) is domain IV, binds dsDNA.

Belongs to the DnaA family. As to quaternary structure, oligomerizes as a right-handed, spiral filament on DNA at oriC.

It is found in the cytoplasm. Functionally, plays an essential role in the initiation and regulation of chromosomal replication. ATP-DnaA binds to the origin of replication (oriC) to initiate formation of the DNA replication initiation complex once per cell cycle. Binds the DnaA box (a 9 base pair repeat at the origin) and separates the double-stranded (ds)DNA. Forms a right-handed helical filament on oriC DNA; dsDNA binds to the exterior of the filament while single-stranded (ss)DNA is stabiized in the filament's interior. The ATP-DnaA-oriC complex binds and stabilizes one strand of the AT-rich DNA unwinding element (DUE), permitting loading of DNA polymerase. After initiation quickly degrades to an ADP-DnaA complex that is not apt for DNA replication. Binds acidic phospholipids. The sequence is that of Chromosomal replication initiator protein DnaA from Thermosipho melanesiensis (strain DSM 12029 / CIP 104789 / BI429).